Consider the following 615-residue polypeptide: MGLRYDVIVVGLGHAGSEAALACARMGLATLGLTLKRERSAVLSCNPAVGGTAKGHLVRELDALGGEMGRAADQVGTHFKTLNASKGPAVQASRLLCDRDAYAVGMQAVLFSQPNLTVREGEVAALVAGGGRVEGVVLGDGTQVSASAVLLTTGTFLQALMHVGEQKEVGGRLGDDAARGLSESLRALGFTLGRFKTGTPARLARASIDWDALEPQPGDTRVRPFSWRTKVEGEGGMPFPRQPSVTCALTETTPRTHAVLRDNLHRSPLYQGDIVGRGPRYCPSLEDKVVRFASRERHQVFLEPEGPTSPLVYPAGLSTSLPADVQLTFLHTIRGLEQVEVVRFGYAVEYDYAPPTQLKATLETKAIAGLYFAGQLNGTSGYEEAAFQGLWAGINAALQLKGEPPLLPGRDEAHGAVLVDDLVTKGVDEPFRMFTSRSEHRLKLREGNADLRLARHGHRVGLLPREALERVEARGRAVTEEVARLKRTGLAARLRRPEVTYAQLGEGREDWPVLSPDVAEEVEVEVKYEGYVAQAARAAAREAESTDRWRIPEGYCFHEVRGLSSEAVEKLTAHRPGTVGQARRIPGLTPAAVSLLLVALKRGTEAPAVCAQPED.

11 to 16 (GLGHAG) is an FAD binding site. 278 to 292 (GPRYCPSLEDKVVRF) serves as a coordination point for NAD(+).

It belongs to the MnmG family. As to quaternary structure, homodimer. Heterotetramer of two MnmE and two MnmG subunits. Requires FAD as cofactor.

It localises to the cytoplasm. Functionally, NAD-binding protein involved in the addition of a carboxymethylaminomethyl (cmnm) group at the wobble position (U34) of certain tRNAs, forming tRNA-cmnm(5)s(2)U34. This is tRNA uridine 5-carboxymethylaminomethyl modification enzyme MnmG from Myxococcus xanthus (strain DK1622).